Consider the following 408-residue polypeptide: S-adenosylmethionine synthase (408 aa).

His16 serves as a coordination point for ATP. Residue Asp18 participates in Mg(2+) binding. Glu44 is a K(+) binding site. The L-methionine site is built by Glu57 and Gln100. The interval Gln100–Arg110 is flexible loop. ATP-binding positions include Asp177 to Lys179, Asp257, Arg263 to Lys264, Ala280, and Lys284. An L-methionine-binding site is contributed by Asp257. Lys288 is a binding site for L-methionine.

This sequence belongs to the AdoMet synthase family. As to quaternary structure, homotetramer; dimer of dimers. Mg(2+) serves as cofactor. K(+) is required as a cofactor.

Its subcellular location is the cytoplasm. It carries out the reaction L-methionine + ATP + H2O = S-adenosyl-L-methionine + phosphate + diphosphate. It functions in the pathway amino-acid biosynthesis; S-adenosyl-L-methionine biosynthesis; S-adenosyl-L-methionine from L-methionine: step 1/1. Catalyzes the formation of S-adenosylmethionine (AdoMet) from methionine and ATP. The overall synthetic reaction is composed of two sequential steps, AdoMet formation and the subsequent tripolyphosphate hydrolysis which occurs prior to release of AdoMet from the enzyme. This chain is S-adenosylmethionine synthase, found in Bifidobacterium animalis subsp. lactis (strain AD011).